Here is a 378-residue protein sequence, read N- to C-terminus: Probable 3-hydroxyisobutyryl-CoA hydrolase 3 (378 aa).

Substrate is bound by residues Glu138 and Asp146.

This sequence belongs to the enoyl-CoA hydratase/isomerase family.

Its subcellular location is the peroxisome. It carries out the reaction 3-hydroxy-2-methylpropanoyl-CoA + H2O = 3-hydroxy-2-methylpropanoate + CoA + H(+). It functions in the pathway amino-acid degradation; L-valine degradation. Its function is as follows. Involved in valine catabolism. The protein is Probable 3-hydroxyisobutyryl-CoA hydrolase 3 of Arabidopsis thaliana (Mouse-ear cress).